Here is a 95-residue protein sequence, read N- to C-terminus: Aspartyl/glutamyl-tRNA(Asn/Gln) amidotransferase subunit C (95 aa).

It belongs to the GatC family. Heterotrimer of A, B and C subunits.

The catalysed reaction is L-glutamyl-tRNA(Gln) + L-glutamine + ATP + H2O = L-glutaminyl-tRNA(Gln) + L-glutamate + ADP + phosphate + H(+). It carries out the reaction L-aspartyl-tRNA(Asn) + L-glutamine + ATP + H2O = L-asparaginyl-tRNA(Asn) + L-glutamate + ADP + phosphate + 2 H(+). Functionally, allows the formation of correctly charged Asn-tRNA(Asn) or Gln-tRNA(Gln) through the transamidation of misacylated Asp-tRNA(Asn) or Glu-tRNA(Gln) in organisms which lack either or both of asparaginyl-tRNA or glutaminyl-tRNA synthetases. The reaction takes place in the presence of glutamine and ATP through an activated phospho-Asp-tRNA(Asn) or phospho-Glu-tRNA(Gln). This chain is Aspartyl/glutamyl-tRNA(Asn/Gln) amidotransferase subunit C, found in Dehalococcoides mccartyi (strain CBDB1).